The following is a 332-amino-acid chain: Ornithine carbamoyltransferase, catabolic (332 aa).

Residues 60–63 (STRT), Gln-87, Arg-111, and 138–141 (HPTQ) each bind carbamoyl phosphate. L-ornithine is bound by residues Asn-170, Asp-230, and 234–235 (SM). Carbamoyl phosphate-binding positions include 271-272 (CL) and Arg-316.

The protein belongs to the aspartate/ornithine carbamoyltransferase superfamily. OTCase family.

The protein localises to the cytoplasm. It catalyses the reaction carbamoyl phosphate + L-ornithine = L-citrulline + phosphate + H(+). It functions in the pathway amino-acid degradation; L-arginine degradation via ADI pathway; carbamoyl phosphate from L-arginine: step 2/2. In terms of biological role, reversibly catalyzes the transfer of the carbamoyl group from carbamoyl phosphate (CP) to the N(epsilon) atom of ornithine (ORN) to produce L-citrulline. The chain is Ornithine carbamoyltransferase, catabolic (arcB) from Bacillus cereus (strain ATCC 14579 / DSM 31 / CCUG 7414 / JCM 2152 / NBRC 15305 / NCIMB 9373 / NCTC 2599 / NRRL B-3711).